The following is a 166-amino-acid chain: Polyadenylate-binding protein 2 (166 aa).

In terms of domain architecture, RRM spans 55 to 132 (QSVYVGNVDY…RPLKVTPKRT (78 aa)). A disordered region spans residues 129 to 166 (PKRTNVPGMSRGRGRGRGRGRGRGRGGYRGRARGFAPY). Over residues 140–160 (GRGRGRGRGRGRGRGGYRGRA) the composition is skewed to basic residues.

It is found in the nucleus. The polypeptide is Polyadenylate-binding protein 2 (pab2) (Schizosaccharomyces pombe (strain 972 / ATCC 24843) (Fission yeast)).